The following is a 992-amino-acid chain: GATOR2 complex protein WDR59 (992 aa).

7 WD repeats span residues glutamine 57–glycine 98, glycine 103–valine 143, serine 146–glutamate 185, alanine 189–asparagine 229, proline 232–histidine 276, phenylalanine 278–tyrosine 318, and glutamine 319–histidine 362. The segment at proline 343–proline 373 is disordered. The segment covering glutamate 344–proline 373 has biased composition (basic and acidic residues). One can recognise an RWD domain in the interval glutamine 393–phenylalanine 494. Phosphoserine is present on serine 564. A WD 8 repeat occupies lysine 660 to cysteine 706. A phosphoserine mark is found at serine 839, serine 840, and serine 848. The segment at leucine 849–aspartate 870 is disordered. A compositionally biased stretch (basic and acidic residues) spans aspartate 853–leucine 869. A C4-type zinc finger spans residues tyrosine 919–threonine 939. Zn(2+) is bound by residues cysteine 920, cysteine 923, cysteine 932, cysteine 935, cysteine 945, cysteine 956, histidine 961, histidine 964, histidine 967, cysteine 978, cysteine 982, cysteine 984, and cysteine 986. The RING-type; atypical zinc-finger motif lies at phenylalanine 940–glutamate 989.

This sequence belongs to the WD repeat WDR59 family. Component of the GATOR2 subcomplex, composed of MIOS, SEC13, SEH1L, WDR24 and WDR59. The GATOR2 complex interacts with CASTOR1 and CASTOR2; the interaction is negatively regulated by arginine. The GATOR2 complex interacts with SESN1, SESN2 and SESN3; the interaction is negatively regulated by amino acids. Interacts with DDB1-CUL4A/B E3 ligase complexes.

Its subcellular location is the lysosome membrane. With respect to regulation, the GATOR2 complex is negatively regulated by the upstream amino acid sensors CASTOR1 and SESN2, which sequester the GATOR2 complex in absence of amino acids. In the presence of abundant amino acids, GATOR2 is released from CASTOR1 and SESN2 and activated. As a component of the GATOR2 complex, functions as an activator of the amino acid-sensing branch of the mTORC1 signaling pathway. The GATOR2 complex indirectly activates mTORC1 through the inhibition of the GATOR1 subcomplex. GATOR2 probably acts as an E3 ubiquitin-protein ligase toward GATOR1. In the presence of abundant amino acids, the GATOR2 complex mediates ubiquitination of the NPRL2 core component of the GATOR1 complex, leading to GATOR1 inactivation. In the absence of amino acids, GATOR2 is inhibited, activating the GATOR1 complex. This is GATOR2 complex protein WDR59 from Mus musculus (Mouse).